Consider the following 312-residue polypeptide: Serine/threonine-protein phosphatase PP2A catalytic subunit (312 aa).

4 residues coordinate Mn(2+): aspartate 60, histidine 62, aspartate 88, and asparagine 120. The Proton donor role is filled by histidine 121. Residues histidine 170 and histidine 244 each coordinate Mn(2+).

The protein belongs to the PPP phosphatase family. PP-2A subfamily. Mn(2+) serves as cofactor.

It is found in the cytoplasm. The catalysed reaction is O-phospho-L-seryl-[protein] + H2O = L-seryl-[protein] + phosphate. It carries out the reaction O-phospho-L-threonyl-[protein] + H2O = L-threonyl-[protein] + phosphate. This Nicotiana tabacum (Common tobacco) protein is Serine/threonine-protein phosphatase PP2A catalytic subunit.